The primary structure comprises 948 residues: MTKPTPPSSVADIRKSFLDFFASKGHTVVPSSPLVPGNDPTLMFTNSGMVQFKDVFLGTDKRPYVRATSVQACLRAGGKHNDLENVGYTARHHTFFEMLGNWSFGDYFKRDSLKWAWELLTEVYGLPKERLLATVYAEDDEAYDIWTKEIGLPPERVIRIGDNKGGRYKSDNFWMMADTGPCGPCSEIFYDHGPHIPGGPPGSPDEDGDRFIEIWNNVFMQFDMAEDGSVTPLPAPCVDTGMGLERLAAILQHVHSNYEIDLFAALIQAAARETGTADLANPSLKVIADHIRATAFLVSDGVIPSNEGRGYVQRRIVRRAIRHGYKLGRKTPFFHSLVKDLVAQMGDAYPKLREQEQRITEVLKAEEERFFETLANGMDLLDSALDIQLASKALQNKTLRWFASEGREEKLVSFKDDVQVAEAVLISDELRSTEYMQRLKETVPGLNEVKTLHSVIRDWSGLTLPGDLAFKLHDTYGFPLDLTNDVCRERGVTVDEDGFKAAMDRQKAQARAAGKFKMDKALEYGGEANRFSGYDGLTESAKIVAIYVDGTSAQALEAGQNGVVVLDNTPFYAESGGQVGDQGVIHAGGARFAVDDTLKIRADVYGHHGRLESGTLRVGDAVQAEVDAALRAATMRNHSVTHIMHKALREVLGSHVQQKGSLVNAERTRFDFAHNAPVTDAQIREIERRVNEEILANTPTGARVMDIESAQKTGAMMLFGEKYGETVRVLDIGTSRELCGGTHVARTGDIGLFKVVGESGVAAGVRRIEAVTGAGALAYLQQLEDTVAKAAGALRAPAAEITGRIGQALEQVKALEREVAALKGKLASSQGDELAGQAVDVKGLKVLAATLPGADAKTLRDTMDKLKDKLKSAAIVLAAVDGAKVQIAAGVTPDAMAKVKAGELVNFVASQVGGKGGGKPDMAMAGGTDAAALPAALASVAAWVGERA.

Residues histidine 638, histidine 642, cysteine 739, and histidine 743 each contribute to the Zn(2+) site.

This sequence belongs to the class-II aminoacyl-tRNA synthetase family. Zn(2+) is required as a cofactor.

The protein resides in the cytoplasm. The enzyme catalyses tRNA(Ala) + L-alanine + ATP = L-alanyl-tRNA(Ala) + AMP + diphosphate. Its function is as follows. Catalyzes the attachment of alanine to tRNA(Ala) in a two-step reaction: alanine is first activated by ATP to form Ala-AMP and then transferred to the acceptor end of tRNA(Ala). Also edits incorrectly charged Ser-tRNA(Ala) and Gly-tRNA(Ala) via its editing domain. The sequence is that of Alanine--tRNA ligase from Paracidovorax citrulli (strain AAC00-1) (Acidovorax citrulli).